A 432-amino-acid polypeptide reads, in one-letter code: Probable protein phosphatase 2C 33 (432 aa).

The PPM-type phosphatase domain occupies 27–298; the sequence is GGGSERPLVR…DDTTCVVVDI (272 aa). Residues Asp-74, Gly-75, Asp-250, and Asp-289 each coordinate Mn(2+).

It belongs to the PP2C family. Mg(2+) serves as cofactor. It depends on Mn(2+) as a cofactor.

It catalyses the reaction O-phospho-L-seryl-[protein] + H2O = L-seryl-[protein] + phosphate. The enzyme catalyses O-phospho-L-threonyl-[protein] + H2O = L-threonyl-[protein] + phosphate. The chain is Probable protein phosphatase 2C 33 from Oryza sativa subsp. japonica (Rice).